Reading from the N-terminus, the 151-residue chain is Large ribosomal subunit protein uL13 (151 aa).

Residues 129–151 are disordered; it reads PTHPHDAQKPKELNINTIPGAES. A compositionally biased stretch (basic and acidic residues) spans 131-140; it reads HPHDAQKPKE.

The protein belongs to the universal ribosomal protein uL13 family. As to quaternary structure, part of the 50S ribosomal subunit.

Functionally, this protein is one of the early assembly proteins of the 50S ribosomal subunit, although it is not seen to bind rRNA by itself. It is important during the early stages of 50S assembly. This chain is Large ribosomal subunit protein uL13, found in Trichormus variabilis (strain ATCC 29413 / PCC 7937) (Anabaena variabilis).